Consider the following 461-residue polypeptide: Kynurenine 3-monooxygenase (461 aa).

Residues 17 to 18 (LA), 37 to 39 (ERR), and Ala56 each bind FAD. L-kynurenine is bound by residues Arg84 and Tyr98. FAD is bound by residues Arg111, Leu135, Asp311, and 324 to 325 (MN). Residues Asn369 and Tyr404 each contribute to the L-kynurenine site.

It belongs to the aromatic-ring hydroxylase family. KMO subfamily. The cofactor is FAD.

The catalysed reaction is L-kynurenine + NADPH + O2 + H(+) = 3-hydroxy-L-kynurenine + NADP(+) + H2O. The protein operates within cofactor biosynthesis; NAD(+) biosynthesis; quinolinate from L-kynurenine: step 1/3. It functions in the pathway siderophore biosynthesis; quinolobactin biosynthesis. Functionally, catalyzes the hydroxylation of L-kynurenine (L-Kyn) to form 3-hydroxy-L-kynurenine (L-3OHKyn). Probably required for the synthesis of quinolinic acid and the siderophore quinolobactin. This Pseudomonas fluorescens protein is Kynurenine 3-monooxygenase.